The sequence spans 2381 residues: Myb-like protein U (2381 aa).

4 disordered regions span residues 1 to 85 (MKTK…TSNN), 148 to 167 (SSSG…GGIS), 178 to 492 (PTIP…NNNN), and 641 to 696 (NINN…GDEM). Low complexity-rich tracts occupy residues 30–41 (SKSSSKVSQSSS) and 64–79 (TIPA…PTLT). Composition is skewed to low complexity over residues 192 to 204 (NLSS…NILS), 225 to 261 (ENVN…SSSS), and 291 to 315 (SNKS…NNKK). A compositionally biased stretch (acidic residues) spans 331 to 343 (SEYDSSDSSDMDL). Low complexity predominate over residues 363-405 (TTKPNNSNSNNNNNNNSINSTIPASNNINSANNSKTTNKNITS). Positions 421-430 (SETPILTSVK) are enriched in polar residues. 2 stretches are compositionally biased toward low complexity: residues 435 to 492 (QQIP…NNNN) and 641 to 692 (NINN…NNNN). The 44-residue stretch at 856 to 899 (WHEEEKLLFRELFCAYGRDWQMVSTLMCGTKSPTQIKNFYYDVR) folds into the Myb-like domain. Disordered stretches follow at residues 932–1024 (KPEQ…ETPP), 1068–1093 (INQS…NINP), 1145–1207 (TSST…SNQE), 1295–1339 (STTT…PPID), 1422–1474 (PYYP…LSTP), 1597–1647 (PPAT…TTIV), 1667–1849 (PIVK…PPPV), 1961–1985 (TTVP…NGLA), 2055–2106 (TSTV…NGLT), and 2122–2280 (LSGI…NKND). Low complexity predominate over residues 936-953 (NVNSNNNNNGGGNSLKDG). A compositionally biased stretch (basic residues) spans 982–995 (VKKKSRTASKRSFR). Residues 1000-1013 (ANETNRTPKNQPKP) are compositionally biased toward polar residues. Composition is skewed to low complexity over residues 1069–1092 (NQSS…NNIN), 1145–1186 (TSST…TGSA), 1195–1205 (VNNNNNNNLSN), and 1306–1325 (TTTP…QLQQ). The segment covering 1326-1337 (LPPPPPPPPKPP) has biased composition (pro residues). The span at 1427–1474 (PSSTTTNSATSTPTSTPTSTPSTSASTLTPTSTPTSTPVPAPTSLSTP) shows a compositional bias: low complexity. Pro residues predominate over residues 1597–1606 (PPATITPILP). Low complexity predominate over residues 1618 to 1637 (SSSSSSSSSSSSSSSSSSSS). Polar residues-rich tracts occupy residues 1638–1647 (TTKNNSTTIV) and 1671–1701 (QESN…KTLL). Low complexity-rich tracts occupy residues 1702-1735 (PSNS…NPSS) and 1743-1809 (TSNK…TLKP). The span at 1829 to 1844 (APTNSTNQNTIPNATT) shows a compositional bias: polar residues. Composition is skewed to low complexity over residues 1961 to 1970 (TTVPGTTTTT) and 2065 to 2097 (NNMT…QQST). The span at 2129–2138 (NTLSGKSPTP) shows a compositional bias: polar residues. A compositionally biased stretch (low complexity) spans 2154 to 2209 (PSLSSSSANPISITNNTTSLSQQSNTTNTMPSTVSLSSGSTSINSNSSNSKSLRSP). Over residues 2210-2278 (KSSDNDGKES…NNNDKFDSNK (69 aa)) the composition is skewed to basic and acidic residues.

This is Myb-like protein U (mybU) from Dictyostelium discoideum (Social amoeba).